The chain runs to 2136 residues: U5 small nuclear ribonucleoprotein 200 kDa helicase (2136 aa).

Residues Ser17 and Ser26 each carry the phosphoserine modification. Positions 39-81 (EVLSLVGKLEGTRMGDKAQRTKPQMQEERRAKRRKRDEDRHDM) are disordered. Lys46 participates in a covalent cross-link: Glycyl lysine isopeptide (Lys-Gly) (interchain with G-Cter in SUMO2). Positions 48 to 81 (EGTRMGDKAQRTKPQMQEERRAKRRKRDEDRHDM) are enriched in basic and acidic residues. Positions 54-84 (DKAQRTKPQMQEERRAKRRKRDEDRHDMNKM) form a coiled coil. At Ser225 the chain carries Phosphoserine. At Thr389 the chain carries Phosphothreonine. The interval 395-2129 (DLDQGGEALA…YKFSVDVKEA (1735 aa)) is interaction with C9orf78 and WBP4. The Helicase ATP-binding 1 domain occupies 490 to 673 (RAALETDENL…FLRVDPAKGL (184 aa)). 503–510 (APTGAGKT) is a binding site for ATP. The DEAH box signature appears at 615-618 (DEIH). Positions 684 to 921 (PLEQTYVGIT…NAKDAVNWLG (238 aa)) constitute a Helicase C-terminal 1 domain. Tyr709 carries the phosphotyrosine modification. Lys944 participates in a covalent cross-link: Glycyl lysine isopeptide (Lys-Gly) (interchain with G-Cter in SUMO). Lys971 carries the N6-acetyllysine; alternate modification. Lys971 participates in a covalent cross-link: Glycyl lysine isopeptide (Lys-Gly) (interchain with G-Cter in SUMO); alternate. The SEC63 1 domain maps to 982–1286 (TELGRIASHY…SCETQLPVSF (305 aa)). Residues Lys1071 and Lys1199 each participate in a glycyl lysine isopeptide (Lys-Gly) (interchain with G-Cter in SUMO) cross-link. Residues 1282-2136 (LPVSFRHLIL…KEAETDSDSD (855 aa)) are interaction with TSSC4. Residues 1337–1512 (NTVYNSDDNV…WLGCSATSTF (176 aa)) form the Helicase ATP-binding 2 domain. 1350–1357 (APTGSGKT) is a binding site for ATP. At Thr1428 the chain carries Phosphothreonine. The DEAH box motif lies at 1454 to 1457 (DEVH). The region spanning 1545 to 1753 (PVYHAITKHS…TIENKQDAVD (209 aa)) is the Helicase C-terminal 2 domain. The residue at position 1765 (Thr1765) is a Phosphothreonine. The 313-residue stretch at 1812 to 2124 (PLNLGMIAAY…GCDQEYKFSV (313 aa)) folds into the SEC63 2 domain. At Ser2002 the chain carries Phosphoserine. Lys2091 is covalently cross-linked (Glycyl lysine isopeptide (Lys-Gly) (interchain with G-Cter in SUMO)). A Phosphothreonine modification is found at Thr2131. Phosphoserine occurs at positions 2133 and 2135.

The protein belongs to the helicase family. SKI2 subfamily. In terms of assembly, component of a core complex containing at least PRPF8, SNRNP200, EFTUD2 and SNRNP40. Component of the U5 snRNP and U4/U6-U5 tri-snRNP complexes, building blocks of the spliceosome. Component of the U4/U6-U5 tri-snRNP complex composed of the U4, U6 and U5 snRNAs and at least PRPF3, PRPF4, PRPF6, PRPF8, PRPF31, SNRNP200, TXNL4A, SNRNP40, DDX23, CD2BP2, PPIH, SNU13, EFTUD2, SART1 and USP39. Component of precatalytic, catalytic and postcatalytic spliceosomal complexes. Component of the minor spliceosome, which splices U12-type introns. Interacts with C9orf78; the interaction is direct and mutually exclusive with its interaction with WBP4. Interacts with WBP4; the interaction is mutually exclusive with its interaction with C9orf78. Interacts with PRPF8. Interacts with TSSC4; the interaction is direct, excludes recruitment of C9ORF78 and WBP4 to SNRNP200 and negatively regulates its RNA helicase activity.

It localises to the nucleus. It carries out the reaction ATP + H2O = ADP + phosphate + H(+). Functionally, catalyzes the ATP-dependent unwinding of U4/U6 RNA duplices, an essential step in the assembly of a catalytically active spliceosome. Plays a role in pre-mRNA splicing as core component of precatalytic, catalytic and postcatalytic spliceosomal complexes. As a component of the minor spliceosome, involved in the splicing of U12-type introns in pre-mRNAs. Involved in spliceosome assembly, activation and disassembly. Mediates changes in the dynamic network of RNA-RNA interactions in the spliceosome. The sequence is that of U5 small nuclear ribonucleoprotein 200 kDa helicase (Snrnp200) from Mus musculus (Mouse).